We begin with the raw amino-acid sequence, 397 residues long: Elongation factor Tu (397 aa).

The region spanning lysine 10 to glutamine 206 is the tr-type G domain. Positions glycine 19 to threonine 26 are G1. GTP is bound at residue glycine 19 to threonine 26. Threonine 26 is a binding site for Mg(2+). The interval glycine 62–serine 66 is G2. The tract at residues aspartate 83–glycine 86 is G3. Residues aspartate 83–histidine 87 and asparagine 138–aspartate 141 contribute to the GTP site. Residues asparagine 138–aspartate 141 form a G4 region. A G5 region spans residues serine 176–leucine 178.

This sequence belongs to the TRAFAC class translation factor GTPase superfamily. Classic translation factor GTPase family. EF-Tu/EF-1A subfamily. Monomer.

It is found in the cytoplasm. It catalyses the reaction GTP + H2O = GDP + phosphate + H(+). GTP hydrolase that promotes the GTP-dependent binding of aminoacyl-tRNA to the A-site of ribosomes during protein biosynthesis. The protein is Elongation factor Tu of Frankia alni (strain DSM 45986 / CECT 9034 / ACN14a).